Reading from the N-terminus, the 302-residue chain is MDQKRLTHLRQLETESIHIIREVAAEFANPVMLYSIGKDSSVMLHLARKAFYPGTLPFPLLHVDTGWKFREMYAFRDRTANAYGCELLVHKNPEGVAMGINPFVHGSAKHTDIMKTEGLKQALNKYGFDAAFGGARRDEEKSRAKERIYSFRDRFHRWDPKNQRPELWRNYNGQINKGESIRVFPLSNWTEQDIWQYIWLENIDIVPLYLAAERPVLERDGMLMMVDDDRIDLQPGEVIKKRMVRFRTLGCWPLTGAVESHAQTLPEIIEEMLVSTTSERQGRMIDRDQAGSMELKKRQGYF.

It belongs to the PAPS reductase family. CysD subfamily. In terms of assembly, heterodimer composed of CysD, the smaller subunit, and CysN.

It carries out the reaction sulfate + ATP + H(+) = adenosine 5'-phosphosulfate + diphosphate. Its pathway is sulfur metabolism; hydrogen sulfide biosynthesis; sulfite from sulfate: step 1/3. Its function is as follows. With CysN forms the ATP sulfurylase (ATPS) that catalyzes the adenylation of sulfate producing adenosine 5'-phosphosulfate (APS) and diphosphate, the first enzymatic step in sulfur assimilation pathway. APS synthesis involves the formation of a high-energy phosphoric-sulfuric acid anhydride bond driven by GTP hydrolysis by CysN coupled to ATP hydrolysis by CysD. The protein is Sulfate adenylyltransferase subunit 2 of Salmonella paratyphi A (strain AKU_12601).